The chain runs to 418 residues: Gamma-glutamyl phosphate reductase (418 aa).

Belongs to the gamma-glutamyl phosphate reductase family.

It localises to the cytoplasm. It catalyses the reaction L-glutamate 5-semialdehyde + phosphate + NADP(+) = L-glutamyl 5-phosphate + NADPH + H(+). It functions in the pathway amino-acid biosynthesis; L-proline biosynthesis; L-glutamate 5-semialdehyde from L-glutamate: step 2/2. Its function is as follows. Catalyzes the NADPH-dependent reduction of L-glutamate 5-phosphate into L-glutamate 5-semialdehyde and phosphate. The product spontaneously undergoes cyclization to form 1-pyrroline-5-carboxylate. The polypeptide is Gamma-glutamyl phosphate reductase (Clostridium kluyveri (strain NBRC 12016)).